The chain runs to 752 residues: Palmitoyltransferase AKR1 (752 aa).

2 disordered regions span residues 1–21 (MTAE…KSDY) and 49–68 (ASSE…LGSV). The Cytoplasmic segment spans residues 1-318 (MTAEEVDKES…FPLPQYFSAS (318 aa)). Basic and acidic residues-rich tracts occupy residues 9-21 (ESDP…KSDY) and 51-68 (SELK…LGSV). ANK repeat units lie at residues 72-102 (PILE…DLSN), 108-137 (ERVS…EVNF), 142-171 (LDAT…DPNI), 175-208 (QGYN…DVDQ), 212-241 (HQRT…DVKN), and 245-274 (AGFT…DFFQ). The helical transmembrane segment at 319-339 (TGKMLTFFLPWVLIPLVFYIF) threads the bilayer. Over 340–341 (SK) the chain is Lumenal. A helical membrane pass occupies residues 342 to 362 (ITFFIALLINTIVLVISGLVL). Over 363 to 380 (SRLVVPSYLLSKRHPILN) the chain is Cytoplasmic. A helical membrane pass occupies residues 381–401 (SPLLAGILSGTIAIAFFIWFT). Over 402–412 (KISILTFTEKP) the chain is Lumenal. The helical transmembrane segment at 413 to 433 (VGNIIMLGFFIGLITLFIGLM) threads the bilayer. The Cytoplasmic portion of the chain corresponds to 434 to 509 (KSDPGYIPGT…YNQIGLLNHK (76 aa)). Positions 466–516 (HFCVHTWIRIPLRSKYDRDSACLISAFDHFCPWVYNQIGLLNHKLFYMFVV) constitute a DHHC domain. The active-site S-palmitoyl cysteine intermediate is the cysteine 496. A helical transmembrane segment spans residues 510–530 (LFYMFVVLLEISVWWFLPLMM). Residues 531-567 (EYFDELEDYLENRKGKHFGDCHFLGDEDLCFGLHHDT) lie on the Lumenal side of the membrane. A helical membrane pass occupies residues 568–588 (FNFLLLCWVIFQAFWVLCLIA). Topologically, residues 589 to 752 (VQTVQMLKGV…TLPNATEELV (164 aa)) are cytoplasmic.

This sequence belongs to the DHHC palmitoyltransferase family. AKR/ZDHHC17 subfamily.

It is found in the early endosome membrane. The protein localises to the golgi apparatus membrane. It carries out the reaction L-cysteinyl-[protein] + hexadecanoyl-CoA = S-hexadecanoyl-L-cysteinyl-[protein] + CoA. Functionally, palmitoyltransferase specific for casein kinase 1. This chain is Palmitoyltransferase AKR1 (AKR1), found in Kluyveromyces lactis (strain ATCC 8585 / CBS 2359 / DSM 70799 / NBRC 1267 / NRRL Y-1140 / WM37) (Yeast).